We begin with the raw amino-acid sequence, 283 residues long: Pantothenate synthetase (283 aa).

An ATP-binding site is contributed by 26 to 33 (MGNLHEGH). His-33 functions as the Proton donor in the catalytic mechanism. Gln-57 is a binding site for (R)-pantoate. Gln-57 is a beta-alanine binding site. 144-147 (GKKD) serves as a coordination point for ATP. Position 150 (Gln-150) interacts with (R)-pantoate. Residues Val-173 and 181–184 (LSSR) each bind ATP.

Belongs to the pantothenate synthetase family. In terms of assembly, homodimer.

The protein localises to the cytoplasm. It catalyses the reaction (R)-pantoate + beta-alanine + ATP = (R)-pantothenate + AMP + diphosphate + H(+). The protein operates within cofactor biosynthesis; (R)-pantothenate biosynthesis; (R)-pantothenate from (R)-pantoate and beta-alanine: step 1/1. Its function is as follows. Catalyzes the condensation of pantoate with beta-alanine in an ATP-dependent reaction via a pantoyl-adenylate intermediate. This is Pantothenate synthetase from Ralstonia nicotianae (strain ATCC BAA-1114 / GMI1000) (Ralstonia solanacearum).